Consider the following 628-residue polypeptide: 1-deoxy-D-xylulose-5-phosphate synthase (628 aa).

Thiamine diphosphate contacts are provided by residues histidine 72 and 113 to 115; that span reads GHS. Position 144 (aspartate 144) interacts with Mg(2+). Thiamine diphosphate-binding positions include 145-146, asparagine 173, tyrosine 284, and glutamate 367; that span reads GA. Mg(2+) is bound at residue asparagine 173.

It belongs to the transketolase family. DXPS subfamily. As to quaternary structure, homodimer. Mg(2+) is required as a cofactor. Requires thiamine diphosphate as cofactor.

It catalyses the reaction D-glyceraldehyde 3-phosphate + pyruvate + H(+) = 1-deoxy-D-xylulose 5-phosphate + CO2. The protein operates within metabolic intermediate biosynthesis; 1-deoxy-D-xylulose 5-phosphate biosynthesis; 1-deoxy-D-xylulose 5-phosphate from D-glyceraldehyde 3-phosphate and pyruvate: step 1/1. Catalyzes the acyloin condensation reaction between C atoms 2 and 3 of pyruvate and glyceraldehyde 3-phosphate to yield 1-deoxy-D-xylulose-5-phosphate (DXP). This Exiguobacterium sibiricum (strain DSM 17290 / CCUG 55495 / CIP 109462 / JCM 13490 / 255-15) protein is 1-deoxy-D-xylulose-5-phosphate synthase.